Consider the following 77-residue polypeptide: Large ribosomal subunit protein bL28 (77 aa).

This sequence belongs to the bacterial ribosomal protein bL28 family.

This chain is Large ribosomal subunit protein bL28, found in Karelsulcia muelleri (strain GWSS) (Sulcia muelleri).